Here is a 307-residue protein sequence, read N- to C-terminus: Ribosomal RNA small subunit methyltransferase H (307 aa).

S-adenosyl-L-methionine-binding positions include 32-34 (AGH), Asp-51, Ile-82, Asp-99, and Gln-106.

The protein belongs to the methyltransferase superfamily. RsmH family.

It is found in the cytoplasm. It catalyses the reaction cytidine(1402) in 16S rRNA + S-adenosyl-L-methionine = N(4)-methylcytidine(1402) in 16S rRNA + S-adenosyl-L-homocysteine + H(+). In terms of biological role, specifically methylates the N4 position of cytidine in position 1402 (C1402) of 16S rRNA. The protein is Ribosomal RNA small subunit methyltransferase H of Campylobacter concisus (strain 13826).